The chain runs to 190 residues: Xanthine phosphoribosyltransferase (190 aa).

Xanthine is bound by residues Leu-20 and Asn-27. 128–132 (ANGKA) serves as a coordination point for 5-phospho-alpha-D-ribose 1-diphosphate. Residue Lys-156 coordinates xanthine.

Belongs to the purine/pyrimidine phosphoribosyltransferase family. Xpt subfamily. As to quaternary structure, homodimer.

The protein localises to the cytoplasm. It catalyses the reaction XMP + diphosphate = xanthine + 5-phospho-alpha-D-ribose 1-diphosphate. Its pathway is purine metabolism; XMP biosynthesis via salvage pathway; XMP from xanthine: step 1/1. Its function is as follows. Converts the preformed base xanthine, a product of nucleic acid breakdown, to xanthosine 5'-monophosphate (XMP), so it can be reused for RNA or DNA synthesis. This Ruminiclostridium cellulolyticum (strain ATCC 35319 / DSM 5812 / JCM 6584 / H10) (Clostridium cellulolyticum) protein is Xanthine phosphoribosyltransferase.